We begin with the raw amino-acid sequence, 124 residues long: Fluoride-specific ion channel FluC (124 aa).

4 consecutive transmembrane segments (helical) span residues 3 to 23 (IIAI…LSIW), 34 to 54 (YGTL…LVLA), 66 to 86 (LLIV…SFET), and 100 to 120 (LYVL…AGVA). Glycine 74 and threonine 77 together coordinate Na(+).

This sequence belongs to the fluoride channel Fluc/FEX (TC 1.A.43) family.

The protein localises to the cell membrane. It catalyses the reaction fluoride(in) = fluoride(out). With respect to regulation, na(+) is not transported, but it plays an essential structural role and its presence is essential for fluoride channel function. In terms of biological role, fluoride-specific ion channel. Important for reducing fluoride concentration in the cell, thus reducing its toxicity. In Roseiflexus sp. (strain RS-1), this protein is Fluoride-specific ion channel FluC.